The following is a 363-amino-acid chain: Cytoskeleton protein RodZ (363 aa).

At 1-111 (MNTEASQDQT…LGKKHKKRDG (111 aa)) the chain is on the cytoplasmic side. An HTH cro/C1-type domain is found at 19–79 (LRQARESLGL…KLVHLPEDEL (61 aa)). Residues 30–49 (QQTVAERLCLKVSTIRDIEE) constitute a DNA-binding region (H-T-H motif). Residues 112–132 (WLMSFTWLIVLVVLGLTGAWW) traverse the membrane as a helical; Signal-anchor for type II membrane protein segment. Over 133-363 (WQNHQAQQAE…RVARLTVGVE (231 aa)) the chain is Periplasmic. A disordered region spans residues 151-277 (SAQLSQNGGQ…PLPTADAGVS (127 aa)). Over residues 188-199 (PLTNHSVSAITN) the composition is skewed to polar residues. The segment covering 200–225 (SAPTTSSVPTTSSATTSSVPTTSSVP) has biased composition (low complexity). Positions 226–243 (KINSTEPVDTANTNTTMH) are enriched in polar residues. A compositionally biased stretch (low complexity) spans 247-259 (AASAAVSPSQVPQ).

This sequence belongs to the RodZ family.

The protein localises to the cell inner membrane. Functionally, cytoskeletal protein that is involved in cell-shape control through regulation of the length of the long axis. This is Cytoskeleton protein RodZ from Yersinia pseudotuberculosis serotype O:1b (strain IP 31758).